The sequence spans 303 residues: uncharacterized protein (303 aa).

The Fe2OG dioxygenase domain maps to 173 to 300; sequence KLPELLGQLN…RFTVNGWIRK (128 aa).

The cofactor is Fe(2+). L-ascorbate serves as cofactor.

This is an uncharacterized protein from Synechocystis sp. (strain ATCC 27184 / PCC 6803 / Kazusa).